The chain runs to 830 residues: Cyclin-dependent kinase inhibitor FAR1 (830 aa).

The segment at 1 to 31 (MKTPTRVSFEKKIHTPPSGDRDAERSPPKKF) is disordered. Positions 8-27 (SFEKKIHTPPSGDRDAERSP) are enriched in basic and acidic residues. Serine 87 carries the post-translational modification Phosphoserine; by CDC28. 2 positions are modified to phosphoserine: serine 110 and serine 114. The RING-type zinc-finger motif lies at 202–252 (CLICEESISSTFTGEKVVESTCSHTSHYNCYLMLFETLYFQGKFPECKICG). Threonine 306 carries the post-translational modification Phosphothreonine.

As to quaternary structure, associates with the CDC28-CLN complex. In terms of processing, thought to be phosphorylated by MAP kinase FUS3. Thought to enhance the binding of FAR1 to G1-specific cyclin-dependent kinase (CDK) complexes.

Functionally, inhibitor of the cyclin-dependent kinase CDC28. Necessary for cell cycle arrest. Involved in pheromone response. Contributes to mating efficiency. Required for oriented polarization of yeast cells in response to mating pheromones. The polypeptide is Cyclin-dependent kinase inhibitor FAR1 (FAR1) (Saccharomyces cerevisiae (strain ATCC 204508 / S288c) (Baker's yeast)).